The following is a 111-amino-acid chain: N-alpha-acetyltransferase 38-B, NatC auxiliary subunit (111 aa).

A Sm domain is found at 28-106 (TARHKLESLL…IVSIQVELET (79 aa)).

It belongs to the snRNP Sm proteins family. Component of the N-terminal acetyltransferase C (NatC) complex, which is composed of naa35, naa38 and naa30.

It is found in the cytoplasm. In terms of biological role, auxillary component of the N-terminal acetyltransferase C (NatC) complex which catalyzes acetylation of N-terminal methionine residues. This is N-alpha-acetyltransferase 38-B, NatC auxiliary subunit (naa38-b) from Xenopus laevis (African clawed frog).